The chain runs to 368 residues: Homoserine dehydrogenase (368 aa).

Residues V12, G14, and V15 each contribute to the NAD(+) site. V15 is a binding site for NADP(+). Residues V15, K59, T95, S96, and K119 each contribute to the NADPH site. An NAD(+)-binding site is contributed by T95. T95 is an NADP(+) binding site. K119 serves as a coordination point for NADP(+). Residues E146, V149, A151, and L153 each contribute to the Na(+) site. G209 and E212 together coordinate NADP(+). 2 residues coordinate L-homoserine: E212 and D223. K227 serves as the catalytic Proton donor. G349 provides a ligand contact to NAD(+). Residue G349 coordinates NADP(+). Position 349 (G349) interacts with NADPH.

It belongs to the homoserine dehydrogenase family. A metal cation is required as a cofactor.

It carries out the reaction L-homoserine + NADP(+) = L-aspartate 4-semialdehyde + NADPH + H(+). The enzyme catalyses L-homoserine + NAD(+) = L-aspartate 4-semialdehyde + NADH + H(+). The protein operates within amino-acid biosynthesis; L-methionine biosynthesis via de novo pathway; L-homoserine from L-aspartate: step 3/3. It functions in the pathway amino-acid biosynthesis; L-threonine biosynthesis; L-threonine from L-aspartate: step 3/5. Functionally, catalyzes the conversion of L-aspartate-beta-semialdehyde (L-Asa) to L-homoserine (L-Hse), the third step in the biosynthesis of amino acids that derive from aspartate (the aspartate family of amino acids), including methioinine and threonine, the latter of which is a precursor to isoleucine; production of homoserine leads to a branch-point in the pathway as it can either be O-phosphorylated for processing to threonine, or O-acylated for processing to methionine. The polypeptide is Homoserine dehydrogenase (Emericella nidulans (strain FGSC A4 / ATCC 38163 / CBS 112.46 / NRRL 194 / M139) (Aspergillus nidulans)).